The following is a 436-amino-acid chain: Chromosomal replication initiator protein DnaA (436 aa).

Positions 1–69 are domain I, interacts with DnaA modulators; it reads MLADEVLELL…AHLFEVKTGT (69 aa). The interval 69–99 is domain II; the sequence is TKPNVEITTQTKLKSSKQNQVNIKQIKAQST. The domain III, AAA+ region stretch occupies residues 100-314; sequence LLNPAYTFEN…SAIINLNAYA (215 aa). The ATP site is built by glycine 144, glycine 146, lysine 147, and threonine 148. Residues 315 to 436 form a domain IV, binds dsDNA region; that stretch reads NLMRQEITLD…ELKNKILTKG (122 aa).

Belongs to the DnaA family. In terms of assembly, oligomerizes as a right-handed, spiral filament on DNA at oriC.

Its subcellular location is the cytoplasm. In terms of biological role, plays an essential role in the initiation and regulation of chromosomal replication. ATP-DnaA binds to the origin of replication (oriC) to initiate formation of the DNA replication initiation complex once per cell cycle. Binds the DnaA box (a 9 base pair repeat at the origin) and separates the double-stranded (ds)DNA. Forms a right-handed helical filament on oriC DNA; dsDNA binds to the exterior of the filament while single-stranded (ss)DNA is stabiized in the filament's interior. The ATP-DnaA-oriC complex binds and stabilizes one strand of the AT-rich DNA unwinding element (DUE), permitting loading of DNA polymerase. After initiation quickly degrades to an ADP-DnaA complex that is not apt for DNA replication. Binds acidic phospholipids. In Campylobacter curvus (strain 525.92), this protein is Chromosomal replication initiator protein DnaA.